Here is a 199-residue protein sequence, read N- to C-terminus: Glycerol-3-phosphate acyltransferase (199 aa).

5 helical membrane-spanning segments follow: residues 4–24 (FALFYMLFAYLLGSVSSAILI), 56–76 (LAVLIFDMLKGMIPVWAGYYL), 80–100 (QFELGMVALGACLGHIFPIFF), 115–135 (IAPISWAVAGSMFGTWIFVFL), and 154–176 (YVWWFKPEFTFPVALVCCLLIYR).

This sequence belongs to the PlsY family. Probably interacts with PlsX.

The protein resides in the cell inner membrane. It catalyses the reaction an acyl phosphate + sn-glycerol 3-phosphate = a 1-acyl-sn-glycero-3-phosphate + phosphate. It participates in lipid metabolism; phospholipid metabolism. Its function is as follows. Catalyzes the transfer of an acyl group from acyl-phosphate (acyl-PO(4)) to glycerol-3-phosphate (G3P) to form lysophosphatidic acid (LPA). This enzyme utilizes acyl-phosphate as fatty acyl donor, but not acyl-CoA or acyl-ACP. The chain is Glycerol-3-phosphate acyltransferase from Haemophilus influenzae (strain PittEE).